We begin with the raw amino-acid sequence, 197 residues long: Prefoldin subunit 3 (197 aa).

N-acetylalanine is present on alanine 2. Residue lysine 59 is modified to N6-acetyllysine.

The protein belongs to the prefoldin subunit alpha family. Heterohexamer of two PFD-alpha type and four PFD-beta type subunits. Binds to the C-terminal part of VHL.

It is found in the cytoplasm. It localises to the nucleus. Its function is as follows. Binds specifically to cytosolic chaperonin (c-CPN) and transfers target proteins to it. Binds to nascent polypeptide chain and promotes folding in an environment in which there are many competing pathways for nonnative proteins. The chain is Prefoldin subunit 3 (VBP1) from Bos taurus (Bovine).